Consider the following 206-residue polypeptide: Holliday junction branch migration complex subunit RuvA (206 aa).

Residues 1-64 form a domain I region; that stretch reads MIGRLRGNLL…EDAQLLYGFN (64 aa). Residues 65 to 143 are domain II; the sequence is TKKERALFRE…GWGAGDLFTP (79 aa). Residues 144-157 form a flexible linker region; the sequence is ADTTSMDDASDLIS. Residues 158-206 form a domain III region; sequence SPQSAQDEAVSALISLGYKPVQASKMVSQVAKPDMTSESLIRESLKSMI.

This sequence belongs to the RuvA family. In terms of assembly, homotetramer. Forms an RuvA(8)-RuvB(12)-Holliday junction (HJ) complex. HJ DNA is sandwiched between 2 RuvA tetramers; dsDNA enters through RuvA and exits via RuvB. An RuvB hexamer assembles on each DNA strand where it exits the tetramer. Each RuvB hexamer is contacted by two RuvA subunits (via domain III) on 2 adjacent RuvB subunits; this complex drives branch migration. In the full resolvosome a probable DNA-RuvA(4)-RuvB(12)-RuvC(2) complex forms which resolves the HJ.

The protein resides in the cytoplasm. The RuvA-RuvB-RuvC complex processes Holliday junction (HJ) DNA during genetic recombination and DNA repair, while the RuvA-RuvB complex plays an important role in the rescue of blocked DNA replication forks via replication fork reversal (RFR). RuvA specifically binds to HJ cruciform DNA, conferring on it an open structure. The RuvB hexamer acts as an ATP-dependent pump, pulling dsDNA into and through the RuvAB complex. HJ branch migration allows RuvC to scan DNA until it finds its consensus sequence, where it cleaves and resolves the cruciform DNA. The protein is Holliday junction branch migration complex subunit RuvA of Aliivibrio salmonicida (strain LFI1238) (Vibrio salmonicida (strain LFI1238)).